The sequence spans 155 residues: MRLYALSVSLLAAITLLACVIASADSNMVSQMKRRLSQDVSETEITELSESKKPTAQDIDNEERAQLTLLSDSQAIVAVAEKAAHSSPKVLGGTSALATTKFALQSQKTSRLRQLLDKVMKISGLLKKFLNFFKNKKTNTVPKLENKPHNAFDTV.

The signal sequence occupies residues 1-24 (MRLYALSVSLLAAITLLACVIASA). The RxLR-dEER motif lies at 34–64 (RRLSQDVSETEITELSESKKPTAQDIDNEER).

The protein belongs to the RxLR effector family.

It localises to the secreted. The protein localises to the host cell membrane. Functionally, secreted effector that does not suppress pattern-triggered immunity (PTI) in plant host. The sequence is that of Secreted RxLR effector protein RXLR-C301 from Plasmopara halstedii (Downy mildew of sunflower).